Consider the following 92-residue polypeptide: Small ribosomal subunit protein uS19c (92 aa).

The protein belongs to the universal ribosomal protein uS19 family.

Its subcellular location is the plastid. It localises to the chloroplast. Functionally, protein S19 forms a complex with S13 that binds strongly to the 16S ribosomal RNA. In Amborella trichopoda, this protein is Small ribosomal subunit protein uS19c.